Here is a 1407-residue protein sequence, read N- to C-terminus: MKDLLKFLKAQTKTEEFDAIKIALASPDMIRSWSFGEVKKPETINYRTFKPERDGLFCARIFGPVKDYECLCGKYKRLKHRGVICEKCGVEVTQTKVRRERMGHIELASPTAHIWFLKSLPSRIGLLLDMPLRDIERVLYFESYVVIEGGMTNLERSQILTEEQYLDALEEFGDEFDAKMGAEAIQALLKSMDLEAECEQLREELNETNSETKRKKLTKRIKLLEAFVQSGNKPEWMILTVLPVLPPDLRPLVPLDGGRFATSDLNDLYRRVINRNNRLKRLLDLAAPDIIVRNEKRMLQEAVDALLDNGRRGRAITGSNKRPLKSLADMIKGKQGRFRQNLLGKRVDYSGRSVITVGPYLRLHQCGLPKKMALELFKPFIYGKLELRGLATTIKAAKKMVEREEAVVWDILDEVIREHPVLLNRAPTLHRLGIQAFEPVLIEGKAIQLHPLVCAAYNADFDGDQMAVHVPLTLEAQLEARALMMSTNNILSPANGEPIIVPSQDVVLGLYYMTRDKINAKGEGMVLTGPKEAERLYRSGQAELHARVKVRITEYEKDANGEFVAKTSLIDTTVGRAILWMIVPKGLPFSIVNQPLGKKAISKMLNTCYRILGLKPTVIFADQTMYTGFAYAARSGASVGIDDMVIPAKKAEIIAEAEAEVAEIQEQFQSGLVTAGERYNKVIDIWAAANDRVSKAMMDNLQTETVINRNGEEEQQVSFNSIYMMADSGARGSAAQIRQLAGMRGLMAKPDGSIIETPITANFREGLNVLQYFISTHGARKGLADTALKTANSGYLTRRLVDVAQDLVVTEDDCGTLEGITMTPVIEGGDVKEPLRDRVLGRVTAEDVLKPGTADILVARNTLLNEQWCDILEANSVDSVKVRSVVTCDTDFGVCAHCYGRDLARGHIINKGEAIGVIAAQSIGEPGTQLTMRTFHIGGAASRAAAESSIQVKNKGSIRLSNAKSVVNSSGKLVVTSRNTELKLIDEFGRTKESYKVPYGAVMAKGDGEQVAGGETVANWDPHTMPVITEVAGYIRFTDMIDGQTITRQTDELTGLSSLVVLDSAERTAGGKDLRPALKIVDANGNDVLIPGTDMPAQYFLPGKAIVQLEDGVQISSGDTLARIPQESGGTKDITGGLPRVADLFEARRPKEPAILAEVAGIVSFGKETKGKRRLVITPVDGGDAYEEMIPKWRQLNVFEGERVERGDVISDGPEAPHDILRLRGVQAVTRYIVNEVQDVYRLQGVKINDKHIEVIVRQMLRKATIMDAGSSEFLEGEQVEYSRVKIANRELEANGKVSATYMRDLLGITKASLATESFISAASFQETTRVLTEAAVAGKRDELRGLKENVIVGRLIPAGTGYAYHQDRMRRRAAGELPAAPQVTAEDASASLAELLNAGLGGNDNE.

The Zn(2+) site is built by cysteine 70, cysteine 72, cysteine 85, and cysteine 88. Positions 460, 462, and 464 each coordinate Mg(2+). 4 residues coordinate Zn(2+): cysteine 814, cysteine 888, cysteine 895, and cysteine 898.

The protein belongs to the RNA polymerase beta' chain family. The RNAP catalytic core consists of 2 alpha, 1 beta, 1 beta' and 1 omega subunit. When a sigma factor is associated with the core the holoenzyme is formed, which can initiate transcription. Requires Mg(2+) as cofactor. The cofactor is Zn(2+).

The catalysed reaction is RNA(n) + a ribonucleoside 5'-triphosphate = RNA(n+1) + diphosphate. DNA-dependent RNA polymerase catalyzes the transcription of DNA into RNA using the four ribonucleoside triphosphates as substrates. The protein is DNA-directed RNA polymerase subunit beta' of Cronobacter sakazakii (strain ATCC BAA-894) (Enterobacter sakazakii).